Here is a 227-residue protein sequence, read N- to C-terminus: ATP-dependent dethiobiotin synthetase BioD (227 aa).

Residue 13–18 participates in ATP binding; the sequence is DIGKTY. Threonine 17 is a Mg(2+) binding site. Residue lysine 38 is part of the active site. Residue serine 42 coordinates substrate. ATP contacts are provided by residues aspartate 55, 116 to 119, and 179 to 180; these read EGSG and NN. Mg(2+) is bound by residues aspartate 55 and glutamate 116.

This sequence belongs to the dethiobiotin synthetase family. In terms of assembly, homodimer. The cofactor is Mg(2+).

The protein localises to the cytoplasm. It carries out the reaction (7R,8S)-7,8-diammoniononanoate + CO2 + ATP = (4R,5S)-dethiobiotin + ADP + phosphate + 3 H(+). It functions in the pathway cofactor biosynthesis; biotin biosynthesis; biotin from 7,8-diaminononanoate: step 1/2. Its function is as follows. Catalyzes a mechanistically unusual reaction, the ATP-dependent insertion of CO2 between the N7 and N8 nitrogen atoms of 7,8-diaminopelargonic acid (DAPA, also called 7,8-diammoniononanoate) to form a ureido ring. This Clostridium botulinum (strain Kyoto / Type A2) protein is ATP-dependent dethiobiotin synthetase BioD.